The chain runs to 98 residues: NADH-ubiquinone oxidoreductase chain 4L (98 aa).

Helical transmembrane passes span 1-21 (MSLVYMNIMTAFMVSLAGLLM), 29-49 (SLLCLEGMMLSLFVLATLTIL), and 61-81 (IILLVFGACEAALGLSLLVMV).

Belongs to the complex I subunit 4L family. Core subunit of respiratory chain NADH dehydrogenase (Complex I) which is composed of 45 different subunits.

The protein localises to the mitochondrion inner membrane. It catalyses the reaction a ubiquinone + NADH + 5 H(+)(in) = a ubiquinol + NAD(+) + 4 H(+)(out). Core subunit of the mitochondrial membrane respiratory chain NADH dehydrogenase (Complex I) which catalyzes electron transfer from NADH through the respiratory chain, using ubiquinone as an electron acceptor. Part of the enzyme membrane arm which is embedded in the lipid bilayer and involved in proton translocation. This Muntiacus vuquangensis (Giant muntjac) protein is NADH-ubiquinone oxidoreductase chain 4L (MT-ND4L).